The sequence spans 106 residues: Testis-specific basic protein Y 2 (106 aa).

This sequence belongs to the VCX/VCY family. Interacts with MAP1S. Interacts with UBE3A (via HECT domain). As to expression, expressed exclusively in testis. Expressed in ejaculated spermatozoa of germ cell. Expressed in the nuclei of spermatogonia, spermatocytes, and round spermatids, except elongated spermatids (at protein level).

The sequence is that of Testis-specific basic protein Y 2 (BPY2) from Homo sapiens (Human).